The primary structure comprises 491 residues: Cadherin-3 (491 aa).

Cadherin domains are found at residues 1-102 (ENTV…PPVF), 103-208 (VPPS…DHGP), and 209-314 (VPEP…DPWT). At 1 to 316 (ENTVSHEVQR…VTCRDPWTWG (316 aa)) the chain is on the extracellular side. An N-linked (GlcNAc...) asparagine glycan is attached at Asn-228. A helical membrane pass occupies residues 317–339 (FLLPILGAALALLLLLLVLLFLV). The Cytoplasmic segment spans residues 340 to 491 (RKKRKIKEPL…ADMYGGGQDD (152 aa)).

Interacts with CDCP1 and CTNNB1.

The protein resides in the cell membrane. Cadherins are calcium-dependent cell adhesion proteins. They preferentially interact with themselves in a homophilic manner in connecting cells; cadherins may thus contribute to the sorting of heterogeneous cell types. The chain is Cadherin-3 (CDH3) from Bos taurus (Bovine).